The following is an 833-amino-acid chain: Leucine--tRNA ligase (833 aa).

A 'HIGH' region motif is present at residues 41–52 (PYPSGAGLHVGH). Residues 610–614 (KMSKS) carry the 'KMSKS' region motif. K613 is an ATP binding site.

Belongs to the class-I aminoacyl-tRNA synthetase family.

The protein localises to the cytoplasm. The enzyme catalyses tRNA(Leu) + L-leucine + ATP = L-leucyl-tRNA(Leu) + AMP + diphosphate. The polypeptide is Leucine--tRNA ligase (Streptococcus pyogenes serotype M2 (strain MGAS10270)).